Here is a 465-residue protein sequence, read N- to C-terminus: Putative subtilisin-like proteinase 1 (465 aa).

An N-terminal signal peptide occupies residues 1 to 17 (MILAIISLSVVICREVS). One can recognise an Inhibitor I9 domain in the interval 19–90 (YIVMFDQDPS…VKMVVKDSPV (72 aa)). The region spanning 115–447 (PWGLARVGGS…PSLFNANKKK (333 aa)) is the Peptidase S8 domain. Active-site charge relay system residues include Asp148 and His180. An intrachain disulfide couples Cys329 to Cys360. Ser386 (charge relay system) is an active-site residue.

Belongs to the peptidase S8 family.

Its subcellular location is the secreted. The protein resides in the extracellular space. In terms of biological role, may be involved in the degradation of proteins for nutrient acquisition or possess a regulatory function by proteolytic activation of proproteins. The sequence is that of Putative subtilisin-like proteinase 1 (SPL1) from Encephalitozoon cuniculi (strain GB-M1) (Microsporidian parasite).